Reading from the N-terminus, the 220-residue chain is MKINQYIDHTLLKPESRQDQIDKLIREAKTYNFASVCINPTWVSYAAKALEGTDIKVCTVIGFPLGATTSAVKAFETKDAISHGADEVDMVINIGQAKSGHFAFVEEDIRAVVEASGDKLVKVIIETCLLTDKEKIKACQAAVAAGADFVKTSTGFSTAGARLDDVRLMRQTVGPDVGVKAAGGTRSLEDAQAFIEAGATRIGTSAGVTIMEGKQTNSGY.

Residue aspartate 89 is the Proton donor/acceptor of the active site. Lysine 151 (schiff-base intermediate with acetaldehyde) is an active-site residue. The active-site Proton donor/acceptor is the lysine 180.

The protein belongs to the DeoC/FbaB aldolase family. DeoC type 1 subfamily.

It is found in the cytoplasm. It catalyses the reaction 2-deoxy-D-ribose 5-phosphate = D-glyceraldehyde 3-phosphate + acetaldehyde. It participates in carbohydrate degradation; 2-deoxy-D-ribose 1-phosphate degradation; D-glyceraldehyde 3-phosphate and acetaldehyde from 2-deoxy-alpha-D-ribose 1-phosphate: step 2/2. Functionally, catalyzes a reversible aldol reaction between acetaldehyde and D-glyceraldehyde 3-phosphate to generate 2-deoxy-D-ribose 5-phosphate. The sequence is that of Deoxyribose-phosphate aldolase from Streptococcus mutans serotype c (strain ATCC 700610 / UA159).